Here is a 518-residue protein sequence, read N- to C-terminus: Cytochrome P450 3A27 (518 aa).

Cys447 is a heme binding site.

This sequence belongs to the cytochrome P450 family. It depends on heme as a cofactor.

It localises to the endoplasmic reticulum membrane. The protein resides in the microsome membrane. The catalysed reaction is an organic molecule + reduced [NADPH--hemoprotein reductase] + O2 = an alcohol + oxidized [NADPH--hemoprotein reductase] + H2O + H(+). Its function is as follows. Cytochromes P450 are a group of heme-thiolate monooxygenases. In liver microsomes, this enzyme is involved in an NADPH-dependent electron transport pathway. It oxidizes a variety of structurally unrelated compounds, including steroids, fatty acids, and xenobiotics. The protein is Cytochrome P450 3A27 (cyp3a27) of Oncorhynchus mykiss (Rainbow trout).